Consider the following 253-residue polypeptide: uncharacterized protein (253 aa).

A signal peptide spans 1–19 (MHYLKKVTIYISLLILVSG). C20 carries the N-palmitoyl cysteine lipid modification. C20 carries S-diacylglycerol cysteine lipidation.

The protein belongs to the staphylococcal tandem lipoprotein family.

The protein localises to the cell membrane. This is an uncharacterized protein from Staphylococcus epidermidis (strain ATCC 35984 / DSM 28319 / BCRC 17069 / CCUG 31568 / BM 3577 / RP62A).